Reading from the N-terminus, the 408-residue chain is MDPRILERLRLGLSDDERRLVIRSATGGEDVTEYSFGIEEEYFLADARTLDVAIRTPDDLFEAANWSTGGQAMREMLQAQIEVATNVHVDSRDAREELKFLRREVASVAGQYGLTILACSTHPTAMWRSSQPTPRPRYAEMMEDLRIVGQRNMLCGMHVHVQLPDSERRFAVMRAMIPYIPVFIALSASSPFWNSRETGLKGYRLAAYDELPRTGLPELFTSKPEYDRYVAALTRSGVMPDESHVWWAMRPSLRHPTLELRAPDVCTSVDDAVAVASLYRALARHLYLHPDLADAVGNVERAIAVENKWRAQRYGTDCLFVAEEGPVTGQEILNRMIADIAPHAEALDCLAEVERCRTIMQFGSSADYQLQAYRESGGELSAVLRWIEVATVSRSDPPRTHAPVEPAQ.

This sequence belongs to the glutamate--cysteine ligase type 2 family. YbdK subfamily.

The catalysed reaction is L-cysteine + L-glutamate + ATP = gamma-L-glutamyl-L-cysteine + ADP + phosphate + H(+). Its function is as follows. ATP-dependent carboxylate-amine ligase which exhibits weak glutamate--cysteine ligase activity. The sequence is that of Putative glutamate--cysteine ligase 2 from Bradyrhizobium sp. (strain BTAi1 / ATCC BAA-1182).